The chain runs to 265 residues: RNA-binding protein 7 (265 aa).

Residue Gly2 is modified to N-acetylglycine. Residues 10 to 87 form the RRM domain; the sequence is RTLFVGNLET…RPIKIQFRSG (78 aa). 2 ZCCHC8 binding regions span residues 25-35 and 59-76; these read LLFELFHQAGP and HEVS…IKLF. Residues 91–125 form a disordered region; it reads ASQDASVSYPQHHVGNLSPTSTSPNSYERTVGNVS. The span at 107 to 125 shows a compositional bias: polar residues; the sequence is LSPTSTSPNSYERTVGNVS. The residue at position 136 (Ser136) is a Phosphoserine; by MAPKAPK2. Phosphoserine is present on Ser137. At Arg152 the chain carries Omega-N-methylarginine. Disordered stretches follow at residues 166–224 and 237–265; these read DQLG…HGSD and DDRN…SSRH. Residues 170–196 are compositionally biased toward polar residues; the sequence is FSPSAQPHGHTFNQSSSSQWRQDALSS. Ser203 is modified (phosphoserine). Composition is skewed to basic and acidic residues over residues 207 to 224 and 237 to 256; these read LADR…HGSD and DDRN…DSSR.

As to quaternary structure, component of the nuclear exosome targeting (NEXT) complex composed of MTREX, ZCCHC8, and RBM7 that directs a subset of non-coding short-lived RNAs for exosomal degradation. Interacts with ZCCHC8 and SF3B2/SAP145. Binds to MTREX through ZCCHC8. Interacts with YWHAE and YWHAZ; these interactions are stress-dependent and RBM7 phosphorylation dependent; release RNA from the NEXT complex and may affect RNA targeting to the nuclear RNA exosomome for degradation. Interacts with MEPCE and LARP7, the core subunits of 7SK snRNP; upon genotoxic stress this interaction is enhanced, triggering the release of inactive P-TEFb complex from the core and P-TEFb complex activation. Phosphorylated at Ser-136 by MAPK14/p38-alpha-activated MAPKAPK2/MK2; this phosphorylation is stress-dependent; this phosphorylation decreases its RNA-binding capacity therefore affecting RNA nuclear exosome-mediated degradation. This phosphorylation mediates YWHAE and YWHAZ interactions.

Its subcellular location is the nucleus. The protein resides in the nucleoplasm. Its function is as follows. RNA-binding subunit of the trimeric nuclear exosome targeting (NEXT) complex, a complex that functions as an RNA exosome cofactor that directs a subset of non-coding short-lived RNAs for exosomal degradation. NEXT is involved in surveillance and turnover of aberrant transcripts and non-coding RNAs. Binds preferentially polyuridine sequences and associates with newly synthesized RNAs, including pre-mRNAs and short-lived exosome substrates such as promoter upstream transcripts (PROMPTs), enhancer RNAs (eRNAs), and 3'-extended products from small nuclear RNAs (snRNAs). Participates in several biological processes including DNA damage response (DDR) and stress response. During stress response, activation of the p38MAPK-MK2 pathway decreases RBM7-RNA-binding and subsequently the RNA exosome degradation activities, thereby modulating the turnover of non-coding transcriptome. Participates in DNA damage response (DDR), through its interaction with MEPCE and LARP7, the core subunits of 7SK snRNP complex, that release the positive transcription elongation factor b (P-TEFb) complex from the 7SK snRNP. In turn, activation of P-TEFb complex induces the transcription of P-TEFb-dependent DDR genes to promote cell viability. The polypeptide is RNA-binding protein 7 (Mus musculus (Mouse)).